The primary structure comprises 154 residues: Large ribosomal subunit protein uL13 (154 aa).

The protein belongs to the universal ribosomal protein uL13 family. As to quaternary structure, part of the 50S ribosomal subunit.

Functionally, this protein is one of the early assembly proteins of the 50S ribosomal subunit, although it is not seen to bind rRNA by itself. It is important during the early stages of 50S assembly. This chain is Large ribosomal subunit protein uL13, found in Cereibacter sphaeroides (strain ATCC 17025 / ATH 2.4.3) (Rhodobacter sphaeroides).